The chain runs to 694 residues: Long-chain-fatty-acid--CoA ligase 3 (694 aa).

Positions 1–25 (MSEQHSVAVGKAANEHETAPRRNVR) are disordered. An N-acetylserine modification is found at serine 2. 269–280 (YTSGSISAPKGV) lines the ATP pocket. Positions 527–576 (DGWFRTGDIVEWTPKGQLKIIDRRKNLVKTLNGEYIALEKLESVYRSNSY) match the FACS motif.

The protein belongs to the ATP-dependent AMP-binding enzyme family. In terms of assembly, interacts with FRK1. It depends on Mg(2+) as a cofactor.

The protein resides in the cell membrane. It carries out the reaction a long-chain fatty acid + ATP + CoA = a long-chain fatty acyl-CoA + AMP + diphosphate. It catalyses the reaction (9Z)-octadecenoate + ATP + CoA = (9Z)-octadecenoyl-CoA + AMP + diphosphate. The catalysed reaction is hexadecanoate + ATP + CoA = hexadecanoyl-CoA + AMP + diphosphate. The enzyme catalyses (9Z)-hexadecenoate + ATP + CoA = (9Z)-hexadecenoyl-CoA + AMP + diphosphate. It carries out the reaction (9Z)-tetradecenoate + ATP + CoA = (9Z)-tetradecenoyl-CoA + AMP + diphosphate. It catalyses the reaction (9Z,12Z)-octadecadienoate + ATP + CoA = (9Z,12Z)-octadecadienoyl-CoA + AMP + diphosphate. Functionally, activates endogenous long-chain fatty acids (LCFA) by esterification of the fatty acids into metabolically active CoA-thioesters for subsequent degradation or incorporation into phospholipids. Acts preferentially on C16 and C18 fatty acids with a cis-double bond at C-9-C-10. This is Long-chain-fatty-acid--CoA ligase 3 (FAA3) from Saccharomyces cerevisiae (strain ATCC 204508 / S288c) (Baker's yeast).